The primary structure comprises 179 residues: Protein GrpE (179 aa).

The segment at 1-22 is disordered; the sequence is MTDNNIENNEEEIRKAPSANDR. A compositionally biased stretch (basic and acidic residues) spans 11–22; sequence EEIRKAPSANDR.

Belongs to the GrpE family. As to quaternary structure, homodimer.

The protein resides in the cytoplasm. Functionally, participates actively in the response to hyperosmotic and heat shock by preventing the aggregation of stress-denatured proteins, in association with DnaK and GrpE. It is the nucleotide exchange factor for DnaK and may function as a thermosensor. Unfolded proteins bind initially to DnaJ; upon interaction with the DnaJ-bound protein, DnaK hydrolyzes its bound ATP, resulting in the formation of a stable complex. GrpE releases ADP from DnaK; ATP binding to DnaK triggers the release of the substrate protein, thus completing the reaction cycle. Several rounds of ATP-dependent interactions between DnaJ, DnaK and GrpE are required for fully efficient folding. This is Protein GrpE from Rickettsia canadensis (strain McKiel).